The primary structure comprises 215 residues: Ras-related protein Rab-5A (215 aa).

GTP is bound by residues Ser29, Ala30, Gly32, Lys33, Ser34, Ser35, His46, Glu47, Thr52, and Gly78. A Mg(2+)-binding site is contributed by Ser34. Short sequence motifs (switch) lie at residues Gln44–Ala56 and Ala77–Ala93. Position 52 (Thr52) interacts with Mg(2+). Residue Ser84 is modified to Phosphoserine. GTP contacts are provided by Asn133, Lys134, Asp136, Ala164, and Lys165. Positions Leu181 to Asn215 are disordered. S-geranylgeranyl cysteine attachment occurs at residues Cys212 and Cys213.

This sequence belongs to the small GTPase superfamily. Rab family. As to quaternary structure, interacts with GDI1; this promotes dissociation from membranes; phosphorylation at Ser-84 disrupts this interaction. Interacts with GDI2; phosphorylation at Ser-84 disrupts the interaction. Interacts with EEA1. Interacts with RIN1 and GAPVD1, which regulate its pathway, probably by acting as a GEF. Interacts with RINL. Interacts with ALS2CL, SUN2, ZFYVE20 and RUFY1. Interacts with RABEP1; one RABEP1 homodimer binds two RAB5A chains, but at opposite sides of the dimer. Interacts with SGSM1 and SGSM3. Interacts with PIK3CB. Interacts with OCRL and INPP5F. May be a component of a complex composed of RAB5A, DYN2 and PIK3C3. Does not interact with BLOC-3 complex (heterodimer of HPS1 and HPS4). Interacts with CLN5. Interacts with APPL2. Interacts with F8A1/F8A2/F8A3. Found in a complex with F8A1/F8A2/F8A3, HTT and RAB5A; mediates the recruitment of HTT by RAB5A onto early endosomes. Interacts with ATP9A. Interacts with PPP1R21; mediates the recruitment of FERRY complex by RAB5A onto early endosomes. Mg(2+) is required as a cofactor. Phosphorylation of Ser-84 in the switch II region by LRRK2 prevents the association of RAB regulatory proteins, including RAB GDP dissociation inhibitors GDI1 and GDI2.

It is found in the cell membrane. It localises to the early endosome membrane. The protein localises to the melanosome. The protein resides in the cytoplasmic vesicle. Its subcellular location is the cell projection. It is found in the ruffle. It localises to the membrane. The protein localises to the cytoplasm. The protein resides in the cytosol. Its subcellular location is the phagosome membrane. It is found in the endosome membrane. The enzyme catalyses GTP + H2O = GDP + phosphate + H(+). Regulated by guanine nucleotide exchange factors (GEFs) including RINL, which promote the exchange of bound GDP for free GTP. Regulated by GTPase activating proteins (GAPs) which increase the GTP hydrolysis activity. Inhibited by GDP dissociation inhibitors (GDIs). Functionally, the small GTPases Rab are key regulators of intracellular membrane trafficking, from the formation of transport vesicles to their fusion with membranes. Rabs cycle between an inactive GDP-bound form and an active GTP-bound form that is able to recruit to membranes different sets of downstream effectors directly responsible for vesicle formation, movement, tethering and fusion. RAB5A is required for the fusion of plasma membranes and early endosomes. Contributes to the regulation of filopodia extension. Required for the exosomal release of SDCBP, CD63, PDCD6IP and syndecan. Regulates maturation of apoptotic cell-containing phagosomes, probably downstream of DYN2 and PIK3C3. The polypeptide is Ras-related protein Rab-5A (Mus musculus (Mouse)).